We begin with the raw amino-acid sequence, 425 residues long: Serine--tRNA ligase (425 aa).

230–232 (TAE) is an L-serine binding site. 261–263 (RAE) is a binding site for ATP. Residue Glu284 coordinates L-serine. ATP is bound at residue 348-351 (EISS). Position 384 (Ser384) interacts with L-serine.

Belongs to the class-II aminoacyl-tRNA synthetase family. Type-1 seryl-tRNA synthetase subfamily. Homodimer. The tRNA molecule binds across the dimer.

It localises to the cytoplasm. The enzyme catalyses tRNA(Ser) + L-serine + ATP = L-seryl-tRNA(Ser) + AMP + diphosphate + H(+). It carries out the reaction tRNA(Sec) + L-serine + ATP = L-seryl-tRNA(Sec) + AMP + diphosphate + H(+). It participates in aminoacyl-tRNA biosynthesis; selenocysteinyl-tRNA(Sec) biosynthesis; L-seryl-tRNA(Sec) from L-serine and tRNA(Sec): step 1/1. Its function is as follows. Catalyzes the attachment of serine to tRNA(Ser). Is also able to aminoacylate tRNA(Sec) with serine, to form the misacylated tRNA L-seryl-tRNA(Sec), which will be further converted into selenocysteinyl-tRNA(Sec). The chain is Serine--tRNA ligase from Zymomonas mobilis subsp. mobilis (strain ATCC 31821 / ZM4 / CP4).